Here is a 246-residue protein sequence, read N- to C-terminus: Probable transcriptional regulatory protein CLK_2466 (246 aa).

This sequence belongs to the TACO1 family.

The protein localises to the cytoplasm. This is Probable transcriptional regulatory protein CLK_2466 from Clostridium botulinum (strain Loch Maree / Type A3).